The primary structure comprises 117 residues: Large ribosomal subunit protein uL22 (117 aa).

It belongs to the universal ribosomal protein uL22 family. As to quaternary structure, part of the 50S ribosomal subunit.

Its function is as follows. This protein binds specifically to 23S rRNA; its binding is stimulated by other ribosomal proteins, e.g. L4, L17, and L20. It is important during the early stages of 50S assembly. It makes multiple contacts with different domains of the 23S rRNA in the assembled 50S subunit and ribosome. The globular domain of the protein is located near the polypeptide exit tunnel on the outside of the subunit, while an extended beta-hairpin is found that lines the wall of the exit tunnel in the center of the 70S ribosome. This chain is Large ribosomal subunit protein uL22, found in Staphylococcus aureus (strain USA300).